The sequence spans 533 residues: Peptide chain release factor 3 (533 aa).

A tr-type G domain is found at 9 to 284 (ARRRTFAIIS…ALCELSPPPL (276 aa)). Residues 18 to 25 (SHPDAGKT), 95 to 99 (DTPGH), and 149 to 152 (NKLD) contribute to the GTP site.

This sequence belongs to the TRAFAC class translation factor GTPase superfamily. Classic translation factor GTPase family. PrfC subfamily.

The protein localises to the cytoplasm. Its function is as follows. Increases the formation of ribosomal termination complexes and stimulates activities of RF-1 and RF-2. It binds guanine nucleotides and has strong preference for UGA stop codons. It may interact directly with the ribosome. The stimulation of RF-1 and RF-2 is significantly reduced by GTP and GDP, but not by GMP. In Cupriavidus taiwanensis (strain DSM 17343 / BCRC 17206 / CCUG 44338 / CIP 107171 / LMG 19424 / R1) (Ralstonia taiwanensis (strain LMG 19424)), this protein is Peptide chain release factor 3.